Here is a 279-residue protein sequence, read N- to C-terminus: Small ribosomal subunit protein uS2 (279 aa).

The protein belongs to the universal ribosomal protein uS2 family. As to quaternary structure, component of the small ribosomal subunit. Mature ribosomes consist of a small (40S) and a large (60S) subunit. The 40S subunit contains about 33 different proteins and 1 molecule of RNA (18S). The 60S subunit contains about 49 different proteins and 3 molecules of RNA (25S, 5.8S and 5S). Interacts with ribosomal protein S21.

It localises to the cytoplasm. Functionally, required for the assembly and/or stability of the 40S ribosomal subunit. Required for the processing of the 20S rRNA-precursor to mature 18S rRNA in a late step of the maturation of 40S ribosomal subunits. This is Small ribosomal subunit protein uS2 from Chlamydomonas reinhardtii (Chlamydomonas smithii).